The following is a 32-amino-acid chain: Alpha-amylase inhibitor AAI (32 aa).

Disulfide bonds link Cys-1–Cys-18, Cys-8–Cys-23, and Cys-17–Cys-31.

As to expression, endosperm.

Alpha-amylase inhibitor. It is active against alpha-amylases from Tribolium castaneum and Prostephanus truncatus larvae. In Amaranthus hypochondriacus (Prince-of-Wales feather), this protein is Alpha-amylase inhibitor AAI (AAI).